A 276-amino-acid polypeptide reads, in one-letter code: Secretagogin (276 aa).

6 EF-hand domains span residues 12–47 (LDAA…LLAK), 58–93 (NVQK…EDEN), 105–140 (DNSV…LFLH), 149–184 (ELEE…QENF), 197–232 (ERKR…MMEL), and 240–276 (VDLD…KINP). Residues Asp25, Tyr31, Glu36, Ser73, Glu75, Arg77, Glu82, Asp118, Asp120, Ser122, Glu129, Asp162, Asn164, Asp166, Arg168, Asp173, Asp210, Ser212, Thr214, Glu221, Asp254, Asn256, Asp258, Lys260, and Glu265 each coordinate Ca(2+).

Its subcellular location is the cytoplasm. The protein localises to the secreted. It localises to the cytoplasmic vesicle. It is found in the secretory vesicle membrane. The protein is Secretagogin (Scgn) of Mus musculus (Mouse).